We begin with the raw amino-acid sequence, 264 residues long: S-adenosylmethionine decarboxylase proenzyme (264 aa).

The active-site Schiff-base intermediate with substrate; via pyruvic acid is the Ser113. Position 113 is a pyruvic acid (Ser); by autocatalysis (Ser113). His118 serves as the catalytic Proton acceptor; for processing activity. Cys141 (proton donor; for catalytic activity) is an active-site residue.

Belongs to the prokaryotic AdoMetDC family. Type 2 subfamily. As to quaternary structure, heterooctamer of four alpha and four beta chains arranged as a tetramer of alpha/beta heterodimers. Pyruvate is required as a cofactor. Is synthesized initially as an inactive proenzyme. Formation of the active enzyme involves a self-maturation process in which the active site pyruvoyl group is generated from an internal serine residue via an autocatalytic post-translational modification. Two non-identical subunits are generated from the proenzyme in this reaction, and the pyruvate is formed at the N-terminus of the alpha chain, which is derived from the carboxyl end of the proenzyme. The post-translation cleavage follows an unusual pathway, termed non-hydrolytic serinolysis, in which the side chain hydroxyl group of the serine supplies its oxygen atom to form the C-terminus of the beta chain, while the remainder of the serine residue undergoes an oxidative deamination to produce ammonia and the pyruvoyl group blocking the N-terminus of the alpha chain.

The catalysed reaction is S-adenosyl-L-methionine + H(+) = S-adenosyl 3-(methylsulfanyl)propylamine + CO2. It functions in the pathway amine and polyamine biosynthesis; S-adenosylmethioninamine biosynthesis; S-adenosylmethioninamine from S-adenosyl-L-methionine: step 1/1. In terms of biological role, catalyzes the decarboxylation of S-adenosylmethionine to S-adenosylmethioninamine (dcAdoMet), the propylamine donor required for the synthesis of the polyamines spermine and spermidine from the diamine putrescine. In Stenotrophomonas maltophilia (strain K279a), this protein is S-adenosylmethionine decarboxylase proenzyme.